The following is a 405-amino-acid chain: Argininosuccinate synthase (405 aa).

ATP contacts are provided by residues 10–18 (AYSGGLDTS) and A37. Residues Y88 and S93 each contribute to the L-citrulline site. G118 contacts ATP. L-aspartate is bound by residues T120, N124, and D125. N124 is an L-citrulline binding site. Residues R128, S179, S188, E264, and Y276 each contribute to the L-citrulline site.

It belongs to the argininosuccinate synthase family. Type 1 subfamily. Homotetramer.

The protein resides in the cytoplasm. It carries out the reaction L-citrulline + L-aspartate + ATP = 2-(N(omega)-L-arginino)succinate + AMP + diphosphate + H(+). It functions in the pathway amino-acid biosynthesis; L-arginine biosynthesis; L-arginine from L-ornithine and carbamoyl phosphate: step 2/3. The protein is Argininosuccinate synthase of Pseudomonas syringae pv. tomato (strain ATCC BAA-871 / DC3000).